Here is a 75-residue protein sequence, read N- to C-terminus: Small ribosomal subunit protein bS18 (75 aa).

Belongs to the bacterial ribosomal protein bS18 family. As to quaternary structure, part of the 30S ribosomal subunit. Forms a tight heterodimer with protein bS6.

Binds as a heterodimer with protein bS6 to the central domain of the 16S rRNA, where it helps stabilize the platform of the 30S subunit. In Roseobacter denitrificans (strain ATCC 33942 / OCh 114) (Erythrobacter sp. (strain OCh 114)), this protein is Small ribosomal subunit protein bS18.